The following is a 339-amino-acid chain: Riboflavin biosynthesis protein RibD (339 aa).

Residues 1–152 form a deaminase region; it reads MNVEQVKSID…REWLHKQRTG (152 aa). Residues 7 to 129 enclose the CMP/dCMP-type deaminase domain; that stretch reads KSIDEAMGLA…RLSAAGLQVR (123 aa). Histidine 57 contributes to the Zn(2+) binding site. The active-site Proton donor is glutamate 59. Residues cysteine 82 and cysteine 91 each contribute to the Zn(2+) site. Positions 153–339 are reductase; that stretch reads LPHVTWKYAT…PDLLLSLVAR (187 aa). Residues alanine 161 and 168–171 contribute to the NADP(+) site; that span reads SAAA. Serine 175 provides a ligand contact to substrate. Tryptophan 177 contacts NADP(+). Arginine 191 provides a ligand contact to substrate. NADP(+)-binding residues include threonine 203 and aspartate 207. 3 residues coordinate substrate: leucine 211, arginine 214, and glutamate 272. 274–280 contacts NADP(+); it reads GPTLAGA.

In the N-terminal section; belongs to the cytidine and deoxycytidylate deaminase family. The protein in the C-terminal section; belongs to the HTP reductase family. Zn(2+) is required as a cofactor.

It catalyses the reaction 2,5-diamino-6-hydroxy-4-(5-phosphoribosylamino)-pyrimidine + H2O + H(+) = 5-amino-6-(5-phospho-D-ribosylamino)uracil + NH4(+). The catalysed reaction is 5-amino-6-(5-phospho-D-ribitylamino)uracil + NADP(+) = 5-amino-6-(5-phospho-D-ribosylamino)uracil + NADPH + H(+). It functions in the pathway cofactor biosynthesis; riboflavin biosynthesis; 5-amino-6-(D-ribitylamino)uracil from GTP: step 2/4. It participates in cofactor biosynthesis; riboflavin biosynthesis; 5-amino-6-(D-ribitylamino)uracil from GTP: step 3/4. Converts 2,5-diamino-6-(ribosylamino)-4(3h)-pyrimidinone 5'-phosphate into 5-amino-6-(ribosylamino)-2,4(1h,3h)-pyrimidinedione 5'-phosphate. This is Riboflavin biosynthesis protein RibD (ribD) from Mycobacterium tuberculosis (strain CDC 1551 / Oshkosh).